A 479-amino-acid polypeptide reads, in one-letter code: Aspartyl/glutamyl-tRNA(Asn/Gln) amidotransferase subunit B (479 aa).

Belongs to the GatB/GatE family. GatB subfamily. As to quaternary structure, heterotrimer of A, B and C subunits.

It carries out the reaction L-glutamyl-tRNA(Gln) + L-glutamine + ATP + H2O = L-glutaminyl-tRNA(Gln) + L-glutamate + ADP + phosphate + H(+). The enzyme catalyses L-aspartyl-tRNA(Asn) + L-glutamine + ATP + H2O = L-asparaginyl-tRNA(Asn) + L-glutamate + ADP + phosphate + 2 H(+). Allows the formation of correctly charged Asn-tRNA(Asn) or Gln-tRNA(Gln) through the transamidation of misacylated Asp-tRNA(Asn) or Glu-tRNA(Gln) in organisms which lack either or both of asparaginyl-tRNA or glutaminyl-tRNA synthetases. The reaction takes place in the presence of glutamine and ATP through an activated phospho-Asp-tRNA(Asn) or phospho-Glu-tRNA(Gln). This is Aspartyl/glutamyl-tRNA(Asn/Gln) amidotransferase subunit B from Streptococcus uberis (strain ATCC BAA-854 / 0140J).